Consider the following 295-residue polypeptide: MPSSTSEDITACTFIGGGVMARCMIDGLLDTYNNSVEIRVTARRSAHVGELATRYPTLVVSQGNISPILWDEPWHKLGKTPAAHVVLICTQPWATSDVCQDIRYVYSNYGFDPEPTFVTMCPGITTAQLEGWLPKGASVVRTMPNTPVAVRQGATALFANKVVTAQQASAVADIFRAVSPQISFIKQEDGIDIAASISGSSPAYVFKLLAILVEAGVSHGLAPDVAGALVKQSCLGAAMQALQDKRSLQSLIADVCVPGGSTEKAMQRLDEGEFSAVVAAAVEKSLDANRAMGKE.

Belongs to the pyrroline-5-carboxylate reductase family.

It functions in the pathway secondary metabolite biosynthesis. Its function is as follows. Delta-1-pyrroline-5-carboxylate reductase; part of the gene cluster that mediates the biosynthesis of the cyclic tetrapeptide apicidin F (APF). The non-ribosomal peptide synthetase apf1 incorporates four different amino acids to produce apicidin F: L-phenylalanine, D-pipecolic acid (D-pip), N-methoxy-L-tryptophan and L-2-aminooctanedioic acid. L-Phenylalanine is the only proteinogenic amino acid directly used by apf1. The 3 other apf1 substrates are non-proteinogenic and have to be modified by other enzymes of the cluster. Lysine is converted to delta-1-pyrroline-5-carboxylate (P5C) which is reduced to L-pipecolic acid (L-pip) by apf3. L-pip is epimerized to D-pip, probably by apf1 activity, prior to incorporation. L-Tryptophan is N-oxidyzed by one of the cytochrome P450 monooxygenases (apf7 or apf8), and further methylated at the hydroxy group by the O-methyltransferase apf6 to yield N-methoxy-L-tryptophan. The synthesis of the fourth apf1 substrate is more complex. The fatty acid synthase apf5 is involved in the synthesis of the octanoic acid backbone of L-2-aminooctanedioic acid by fixing one acetyl-CoA unit and three malonyl-CoA units. Then one of the cytochrome P450 monooxygenases (apf7 or apf8) may oxidize this backbone to 2-oxooctanoic acid. The aminotransferase apf4 is predicted to catalyze the exchange of the keto group with an amino group. The next step would be the oxidation of 2-aminooctanoic acid by one of the cytochrome P450 monooxygenases (apf7 or apf8). The last step is the oxidation of 2-amino-8-hydroxyoctanoic acid to 2-aminooctanedioic acid is catalyzed by the FAD-dependent monooxygenase apf9. The sequence is that of Delta-1-pyrroline-5-carboxylate reductase apf3 from Gibberella fujikuroi (strain CBS 195.34 / IMI 58289 / NRRL A-6831) (Bakanae and foot rot disease fungus).